The primary structure comprises 650 residues: Protein kinase domain-containing protein ppk38 (650 aa).

One can recognise a Protein kinase domain in the interval 33–315 (VTVKRYLAEG…MRNVPIHIYD (283 aa)). Disordered stretches follow at residues 344-442 (IHQS…PTTP), 517-571 (KVAA…PTNM), and 591-616 (RRVS…EKPM). Polar residues-rich tracts occupy residues 369–415 (NVNS…NFRV) and 533–554 (SVEN…SSNA).

The protein is Protein kinase domain-containing protein ppk38 (ppk38) of Schizosaccharomyces pombe (strain 972 / ATCC 24843) (Fission yeast).